The sequence spans 1270 residues: DNA-directed RNA polymerase subunit beta (1270 aa).

It belongs to the RNA polymerase beta chain family. As to quaternary structure, the RNAP catalytic core consists of 2 alpha, 1 beta, 1 beta' and 1 omega subunit. When a sigma factor is associated with the core the holoenzyme is formed, which can initiate transcription.

The enzyme catalyses RNA(n) + a ribonucleoside 5'-triphosphate = RNA(n+1) + diphosphate. Functionally, DNA-dependent RNA polymerase catalyzes the transcription of DNA into RNA using the four ribonucleoside triphosphates as substrates. This chain is DNA-directed RNA polymerase subunit beta, found in Bacteroides thetaiotaomicron (strain ATCC 29148 / DSM 2079 / JCM 5827 / CCUG 10774 / NCTC 10582 / VPI-5482 / E50).